Here is a 194-residue protein sequence, read N- to C-terminus: Large ribosomal subunit protein bL12m (194 aa).

A mitochondrion-targeting transit peptide spans 1–33; it reads MSLRILAKRSSSIWMKTRVTPALISPITITTRF. N-linked (GlcNAc...) asparagine glycosylation is present at Asn-34. Residues 101-120 are disordered; sequence AGNVPSSTGEAGSGAEEEAK. Residues 105–114 are compositionally biased toward low complexity; that stretch reads PSSTGEAGSG.

The protein belongs to the bacterial ribosomal protein bL12 family. As to quaternary structure, component of the mitochondrial large ribosomal subunit (mt-LSU). Mature yeast 74S mitochondrial ribosomes consist of a small (37S) and a large (54S) subunit. The 37S small subunit contains a 15S ribosomal RNA (15S mt-rRNA) and 34 different proteins. The 54S large subunit contains a 21S rRNA (21S mt-rRNA) and 46 different proteins. N-glycosylated.

The protein localises to the mitochondrion. Its function is as follows. Component of the mitochondrial ribosome (mitoribosome), a dedicated translation machinery responsible for the synthesis of mitochondrial genome-encoded proteins, including at least some of the essential transmembrane subunits of the mitochondrial respiratory chain. The mitoribosomes are attached to the mitochondrial inner membrane and translation products are cotranslationally integrated into the membrane. This Saccharomyces cerevisiae (strain ATCC 204508 / S288c) (Baker's yeast) protein is Large ribosomal subunit protein bL12m (MNP1).